A 363-amino-acid polypeptide reads, in one-letter code: Biotin synthase (363 aa).

A Radical SAM core domain is found at 38–266 (NTVQVSTLLS…ETQVRLSAGR (229 aa)). Residues Cys53, Cys57, and Cys60 each coordinate [4Fe-4S] cluster. Residues Cys97, Cys129, Cys189, and Arg261 each contribute to the [2Fe-2S] cluster site. Positions 315–363 (KAFEKKSQPESVAAEKSKYQSQGEKPRWSRPEHKIDRNLEAQQNAKTKA) are disordered. The segment covering 316-353 (AFEKKSQPESVAAEKSKYQSQGEKPRWSRPEHKIDRNL) has biased composition (basic and acidic residues). The span at 354 to 363 (EAQQNAKTKA) shows a compositional bias: polar residues.

The protein belongs to the radical SAM superfamily. Biotin synthase family. As to quaternary structure, homodimer. It depends on [4Fe-4S] cluster as a cofactor. [2Fe-2S] cluster serves as cofactor.

The catalysed reaction is (4R,5S)-dethiobiotin + (sulfur carrier)-SH + 2 reduced [2Fe-2S]-[ferredoxin] + 2 S-adenosyl-L-methionine = (sulfur carrier)-H + biotin + 2 5'-deoxyadenosine + 2 L-methionine + 2 oxidized [2Fe-2S]-[ferredoxin]. Its pathway is cofactor biosynthesis; biotin biosynthesis; biotin from 7,8-diaminononanoate: step 2/2. Functionally, catalyzes the conversion of dethiobiotin (DTB) to biotin by the insertion of a sulfur atom into dethiobiotin via a radical-based mechanism. The sequence is that of Biotin synthase from Christiangramia forsetii (strain DSM 17595 / CGMCC 1.15422 / KT0803) (Gramella forsetii).